Consider the following 394-residue polypeptide: Mannosyl-3-phosphoglycerate synthase (394 aa).

It belongs to the glycosyltransferase 2 family.

It is found in the cytoplasm. The catalysed reaction is (2R)-3-phosphoglycerate + GDP-alpha-D-mannose = 2-O-(alpha-D-mannosyl)-3-phosphoglycerate + GDP + H(+). Its pathway is carbohydrate biosynthesis; 2-(alpha-D-mannosyl)-D-glycerate biosynthesis; 2-(alpha-D-mannosyl)-D-glycerate from GDP-alpha-D-mannose (MPG route): step 1/2. Functionally, transfers a mannosyl group from GDP-mannose to phosphoglycerate to form mannosyl-3-phosphoglycerate (MPG). The protein is Mannosyl-3-phosphoglycerate synthase (mngA) of Pyrococcus furiosus (strain ATCC 43587 / DSM 3638 / JCM 8422 / Vc1).